The following is a 170-amino-acid chain: MGTDDRLPDRPGADDPGRGRRIGIDVGTVRIGVASSDPDGILATPVETVARDKRDKTGKHVRRLAALVKEYEAVEVIVGLPRTLGDRASASAHDAVDVAEQLARRIAPTPVRLADERLTTVSAQRSLREAGVRARGQKAVIDQVAAVGILQGWLDQRRAALAARREGTDG.

The segment covering 1-18 has biased composition (basic and acidic residues); it reads MGTDDRLPDRPGADDPGR. Residues 1-22 are disordered; it reads MGTDDRLPDRPGADDPGRGRRI.

This sequence belongs to the YqgF nuclease family.

Its subcellular location is the cytoplasm. In terms of biological role, could be a nuclease involved in processing of the 5'-end of pre-16S rRNA. The protein is Putative pre-16S rRNA nuclease of Mycolicibacterium smegmatis (strain ATCC 700084 / mc(2)155) (Mycobacterium smegmatis).